Consider the following 89-residue polypeptide: Small ribosomal subunit protein uS15 (89 aa).

It belongs to the universal ribosomal protein uS15 family. In terms of assembly, part of the 30S ribosomal subunit. Forms a bridge to the 50S subunit in the 70S ribosome, contacting the 23S rRNA.

In terms of biological role, one of the primary rRNA binding proteins, it binds directly to 16S rRNA where it helps nucleate assembly of the platform of the 30S subunit by binding and bridging several RNA helices of the 16S rRNA. Forms an intersubunit bridge (bridge B4) with the 23S rRNA of the 50S subunit in the ribosome. This is Small ribosomal subunit protein uS15 from Corynebacterium glutamicum (strain R).